We begin with the raw amino-acid sequence, 3230 residues long: Helicase SRCAP (3230 aa).

The interval 1–71 (MQSSPSPAHP…GPPDGATVPL (71 aa)) is disordered. Residues 26–41 (GSNPVSPASSSSPASS) show a composition bias toward low complexity. The HSA domain occupies 124–196 (LPKVPEPPRP…EQAKLRRIAS (73 aa)). Disordered stretches follow at residues 253–547 (QPLT…EEDD) and 559–581 (EEQS…LGPK). The span at 257 to 273 (SSKAGSSPCLGSSSAAS) shows a compositional bias: low complexity. A compositionally biased stretch (acidic residues) spans 283-313 (DDEDGDFQPQEDEEEDDEETIEVEEQQEGND). Positions 315 to 329 (EAQRREIELLRREGE) are enriched in basic and acidic residues. The segment covering 337-356 (RSLPPQLLEGPSSPSQTPSS) has biased composition (low complexity). Over residues 397–425 (DEDDEEFTANEEEAEDEEDTIAAEEQLEG) the composition is skewed to acidic residues. Basic and acidic residues predominate over residues 426 to 441 (EVDHAMELSELAREGE). Acidic residues-rich tracts occupy residues 462–490 (SEDE…EPPQ), 503–517 (RSED…EEET), and 524–533 (EESESEESED). Residues 630–795 (VTMYEKKLNG…WSLMHFLMPH (166 aa)) enclose the Helicase ATP-binding domain. ATP is bound at residue 643 to 650 (DEMGLGKT). Disordered regions lie at residues 1017-1045 (APLG…PQVL), 1058-1125 (PPLI…PGSS), and 1138-1166 (TFPP…TPAP). Composition is skewed to pro residues over residues 1018-1030 (PLGP…PPGP) and 1058-1076 (PPLI…PPLQ). Positions 1093-1107 (LSGTSRPPTPTLSLK) are enriched in low complexity. Residues 1108–1123 (PTPPAPVRLSPAPPPG) are compositionally biased toward pro residues. Residues 1138 to 1160 (TFPPAAATTTSTTTATATTTAVP) show a composition bias toward low complexity. Phosphoserine is present on S1172. 4 disordered regions span residues 1320–1366 (GLTP…APMP), 1406–1425 (SLPG…PLAS), 1629–1760 (VPVM…ASPV), and 1839–1893 (SRLP…EEKR). Pro residues predominate over residues 1323–1336 (PVPPLAPAPRPPSS). Low complexity predominate over residues 1337–1360 (GLPAVLNPRPTLTPGRLPTPTLGT). Residues 1675-1691 (PASTQTLALAPALAPTL) show a composition bias toward low complexity. A compositionally biased stretch (polar residues) spans 1692–1733 (GGSSPSQTLSLGTGNPQGPFPTQTLSLTPASSLVPTPAQTLS). Positions 1750–1760 (PAPPLAPASPV) are enriched in pro residues. In terms of domain architecture, Helicase C-terminal spans 2044–2197 (KLQTLAVLLR…DMAIEGGNFT (154 aa)). Disordered stretches follow at residues 2214 to 2233 (LEEP…EETV), 2271 to 2298 (FNEN…MSRA), 2327 to 2453 (VSRE…APAA), 2564 to 2583 (LELA…VPPK), 2598 to 3081 (KNLS…GRKS), and 3095 to 3230 (DLAD…KAKT). The span at 2215–2225 (EEPSSSSVPSA) shows a compositional bias: low complexity. Basic and acidic residues-rich tracts occupy residues 2284 to 2298 (EAGR…MSRA), 2327 to 2358 (VSRE…RLPQ), and 2386 to 2403 (KAPE…RGAR). A compositionally biased stretch (pro residues) spans 2438 to 2448 (RPAPRPRPTPA). 2 stretches are compositionally biased toward low complexity: residues 2564–2579 (LELA…SLSL) and 2600–2611 (LSLTPSAPSLTL). A compositionally biased stretch (basic and acidic residues) spans 2669 to 2679 (EADRTSEELTE). Residues 2694 to 2712 (VTAEVAAPSTSSSATSSPE) are compositionally biased toward low complexity. A compositionally biased stretch (polar residues) spans 2782–2794 (SETSASPGSPSVR). Residues 2807 to 2817 (GPCEAAPSSSL) show a composition bias toward low complexity. Basic residues predominate over residues 2856–2868 (VKRRRGRPPKKNR). Residues 2857 to 2869 (KRRRGRPPKKNRS) constitute a DNA-binding region (a.T hook 1). The segment covering 2913-2926 (IPGPQPLGPQPVHR) has biased composition (pro residues). Residues 2936–2948 (KRRRGRPPKARDL) constitute a DNA-binding region (a.T hook 2). Positions 2953 to 2965 (TISSAGDGNSESR) are enriched in polar residues. Positions 2967–2982 (QPPPHPSPLTPLPPLL) are enriched in pro residues. Over residues 2983-3002 (VCPTATVANTVTTVTISTSP) the composition is skewed to low complexity. Positions 3004-3016 (KRKRGRPPKNPPS) form a DNA-binding region, a.T hook 3. Residues 3011 to 3020 (PKNPPSPRPS) show a composition bias toward pro residues. Over residues 3044 to 3053 (PQGQGESEGS) the composition is skewed to low complexity. Positions 3168–3184 (SVEESEAEASGEEEEGD) are enriched in acidic residues.

This sequence belongs to the SNF2/RAD54 helicase family. SWR1 subfamily. As to quaternary structure, interacts with CREBBP and EP300. May be part of a complex containing SRCAP, CREBBP, CARM1 and GRIP1. Component of the chromatin-remodeling SRCAP complex composed of at least SRCAP, DMAP1, RUVBL1, RUVBL2, ACTL6A, YEATS4, VPS72, ACTR6 and ZNHIT1. Component of a NuA4-related complex which contains EP400, TRRAP/PAF400, SRCAP, BRD8/SMAP, EPC1, DMAP1/DNMAP1, RUVBL1/TIP49, RUVBL2, actin, ACTL6A/BAF53A, VPS72 and YEATS4/GAS41. (Microbial infection) Interacts with hepatitis C virus (HCV) NS5A. In terms of assembly, (Microbial infection) Interacts with human adenovirus 2 DBP.

Its subcellular location is the nucleus. In terms of biological role, catalytic component of the SRCAP complex which mediates the ATP-dependent exchange of histone H2AZ/H2B dimers for nucleosomal H2A/H2B, leading to transcriptional regulation of selected genes by chromatin remodeling. Acts as a coactivator for CREB-mediated transcription, steroid receptor-mediated transcription, and Notch-mediated transcription. In Homo sapiens (Human), this protein is Helicase SRCAP (SRCAP).